A 361-amino-acid chain; its full sequence is Chitinase-3-like protein 1 (361 aa).

The GH18 domain maps to 1–361; the sequence is YKLICYYTSW…SAVKDVLAEV (361 aa). Residues Cys-5 and Cys-30 are joined by a disulfide bond. Residue Asn-39 is glycosylated (N-linked (GlcNAc...) asparagine). Residues 49–50, 76–79, Tyr-120, 183–186, and Arg-241 contribute to the chitin site; these read EW, GGWN, and LTYD. A disulfide bond links Cys-278 and Cys-342. An important for AKT1 activation and IL8 production region spans residues 302 to 316; that stretch reads QWVAYDDQESVKNKA. Trp-330 serves as a coordination point for chitin. A glycan (N-linked (GlcNAc...) asparagine) is linked at Asn-345.

It belongs to the glycosyl hydrolase 18 family. Monomer. As to expression, detected in mammary gland.

The protein resides in the secreted. It localises to the extracellular space. The protein localises to the cytoplasm. It is found in the perinuclear region. Its subcellular location is the endoplasmic reticulum. Functionally, carbohydrate-binding lectin with a preference for chitin. Has no chitinase activity. May play a role in tissue remodeling and in the capacity of cells to respond to and cope with changes in their environment. Plays a role in T-helper cell type 2 (Th2) inflammatory response and IL-13-induced inflammation, regulating allergen sensitization, inflammatory cell apoptosis, dendritic cell accumulation and M2 macrophage differentiation. Facilitates invasion of pathogenic enteric bacteria into colonic mucosa and lymphoid organs. Mediates activation of AKT1 signaling pathway and subsequent IL8 production in colonic epithelial cells. Regulates antibacterial responses in lung by contributing to macrophage bacterial killing, controlling bacterial dissemination and augmenting host tolerance. Also regulates hyperoxia-induced injury, inflammation and epithelial apoptosis in lung. This Ovis aries (Sheep) protein is Chitinase-3-like protein 1 (CHI3L1).